The chain runs to 503 residues: Phenylalanine--tRNA ligase alpha subunit (503 aa).

Ser-2 bears the N-acetylserine mark. The interval 2 to 173 (SDFQLEILKK…KRKLIAQGKI (172 aa)) is contains the major tRNA-Phe binding sites. Residues Thr-333, 374–376 (QVE), and Tyr-414 contribute to the L-phenylalanine site. A Mg(2+)-binding site is contributed by Glu-416. Phe-440 provides a ligand contact to L-phenylalanine.

It belongs to the class-II aminoacyl-tRNA synthetase family. Phe-tRNA synthetase alpha subunit type 2 subfamily. As to quaternary structure, tetramer of two alpha and two beta subunits. It depends on Mg(2+) as a cofactor.

Its subcellular location is the cytoplasm. The enzyme catalyses tRNA(Phe) + L-phenylalanine + ATP = L-phenylalanyl-tRNA(Phe) + AMP + diphosphate + H(+). The chain is Phenylalanine--tRNA ligase alpha subunit (FRS2) from Saccharomyces cerevisiae (strain ATCC 204508 / S288c) (Baker's yeast).